Here is a 345-residue protein sequence, read N- to C-terminus: Metal-dependent phosphohydrolase cns2 (345 aa).

The 102-residue stretch at 70–171 (RLEHSVGAFI…QLCADRLDYA (102 aa)) folds into the HD domain.

As to quaternary structure, interacts with cns1.

It localises to the lipid droplet. It functions in the pathway secondary metabolite biosynthesis. Metal-dependent phosphohydrolase; part of the gene cluster that mediates the biosynthesis of cordycepin (COR) and pentostatin (PTN), two adenosine analogs with related bioactivity profiles as both mimic adenosine and can inhibit some of the processes that are adenosine dependent. Within the pathway, cns2 catalyzes dephosphorylation of 3'-AMP to produce 2'-carbonyl-3'-deoxyadenosine (2'-C-3'-dA). The first step of cordycepin biosynthesis involves hydroxyl phosphorylation of the 3'-OH position on adenosine to produce adenosine-3'-monophosphate (3'-AMP), catalyzed by kinase activity of cns3. Next, 3'-AMP is dephosphorylated to 2'-carbonyl-3'-deoxyadenosine by cns2, which is finally converted to cordycepin (3'-deoxyadenosine) by the oxidoreductase cns1. The polypeptide is Metal-dependent phosphohydrolase cns2 (Cordyceps militaris (strain CM01) (Caterpillar fungus)).